A 218-amino-acid chain; its full sequence is Thiopurine S-methyltransferase (218 aa).

The S-adenosyl-L-methionine site is built by Trp-11, Leu-46, Glu-67, and Arg-122.

The protein belongs to the class I-like SAM-binding methyltransferase superfamily. TPMT family.

The protein localises to the cytoplasm. It catalyses the reaction S-adenosyl-L-methionine + a thiopurine = S-adenosyl-L-homocysteine + a thiopurine S-methylether.. This Vibrio cholerae serotype O1 (strain ATCC 39315 / El Tor Inaba N16961) protein is Thiopurine S-methyltransferase.